The chain runs to 211 residues: tRNA (guanine-N(7)-)-methyltransferase (211 aa).

The S-adenosyl-L-methionine site is built by glutamate 44, aspartate 69, aspartate 96, and aspartate 118. The active site involves aspartate 118. Residue lysine 122 participates in substrate binding. Positions 124–129 (KHEKRR) are interaction with RNA. Residues aspartate 154 and 191 to 194 (TEYE) each bind substrate.

This sequence belongs to the class I-like SAM-binding methyltransferase superfamily. TrmB family.

It catalyses the reaction guanosine(46) in tRNA + S-adenosyl-L-methionine = N(7)-methylguanosine(46) in tRNA + S-adenosyl-L-homocysteine. Its pathway is tRNA modification; N(7)-methylguanine-tRNA biosynthesis. In terms of biological role, catalyzes the formation of N(7)-methylguanine at position 46 (m7G46) in tRNA. This Streptococcus uberis (strain ATCC BAA-854 / 0140J) protein is tRNA (guanine-N(7)-)-methyltransferase.